Consider the following 215-residue polypeptide: L-fuculose phosphate aldolase (215 aa).

Residues 28–29, 43–44, and 71–72 each bind substrate; these read GN, TG, and SS. Glu73 serves as the catalytic Proton donor/acceptor. Zn(2+) contacts are provided by Glu73, His92, His94, and His155.

Belongs to the aldolase class II family. AraD/FucA subfamily. Homotetramer. Requires Zn(2+) as cofactor.

The enzyme catalyses L-fuculose 1-phosphate = (S)-lactaldehyde + dihydroxyacetone phosphate. Its pathway is carbohydrate degradation; L-fucose degradation; L-lactaldehyde and glycerone phosphate from L-fucose: step 3/3. Its activity is regulated as follows. Inhibited by phosphoglycolohydroxamate (PGH). In terms of biological role, involved in the degradation of L-fucose and D-arabinose. Catalyzes the reversible cleavage of L-fuculose 1-phosphate (Fuc1P) to yield dihydroxyacetone phosphate (DHAP) and L-lactaldehyde. Also able to catalyze the reversible cleavage of D-ribulose 1-phosphate, but FucA has a higher affinity for L-fuculose 1-phosphate and L-lactaldehyde than for D-ribulose 1-phosphate and glycolaldehyde, respectively. FucA possesses a high specificity for the dihydroxyacetone phosphate (DHAP), but accepts a great variety of different aldehydes and has a strong preference for L-configurated alpha-hydroxy aldehydes. FucA generates a vicinal diol unit having the absolute (3R,4R)-cis configuration (D-erythro). This is L-fuculose phosphate aldolase from Escherichia coli (strain K12).